Here is a 458-residue protein sequence, read N- to C-terminus: tRNA modification GTPase MnmE (458 aa).

(6S)-5-formyl-5,6,7,8-tetrahydrofolate-binding residues include arginine 22, glutamate 85, and arginine 124. One can recognise a TrmE-type G domain in the interval 220 to 379; it reads GLATAIIGRP…LEEAISRLFF (160 aa). Position 230 (asparagine 230) interacts with K(+). GTP is bound by residues 230 to 235, 249 to 255, and 274 to 277; these read NVGKSS, TDIPGTT, and DTAG. Residue serine 234 participates in Mg(2+) binding. K(+) contacts are provided by threonine 249, isoleucine 251, and threonine 254. Threonine 255 contributes to the Mg(2+) binding site. Lysine 458 lines the (6S)-5-formyl-5,6,7,8-tetrahydrofolate pocket.

It belongs to the TRAFAC class TrmE-Era-EngA-EngB-Septin-like GTPase superfamily. TrmE GTPase family. In terms of assembly, homodimer. Heterotetramer of two MnmE and two MnmG subunits. K(+) is required as a cofactor.

It is found in the cytoplasm. Its function is as follows. Exhibits a very high intrinsic GTPase hydrolysis rate. Involved in the addition of a carboxymethylaminomethyl (cmnm) group at the wobble position (U34) of certain tRNAs, forming tRNA-cmnm(5)s(2)U34. The polypeptide is tRNA modification GTPase MnmE (Shouchella clausii (strain KSM-K16) (Alkalihalobacillus clausii)).